The chain runs to 604 residues: Sulfite reductase [NADPH] flavoprotein alpha-component (604 aa).

In terms of domain architecture, Flavodoxin-like spans 68–206; the sequence is LSIIFASQTG…PAAEWRKQAL (139 aa). Residues 74–79, 121–124, and 157–166 each bind FMN; these read SQTGNA, STNG, and LGDSSYEFFC. Residues 239-453 form the FAD-binding FR-type domain; sequence QNPYTATLLT…VEHNNNFKLP (215 aa). FAD is bound by residues threonine 327, glycine 361, 391-394, 409-411, tyrosine 415, and 424-427; these read RLYS, TVG, and GGAS. NADP(+) is bound by residues 524 to 525, 530 to 534, and aspartate 566; these read SR and KVYVQ. Tyrosine 604 provides a ligand contact to FAD.

Belongs to the NADPH-dependent sulphite reductase flavoprotein subunit CysJ family. The protein in the N-terminal section; belongs to the flavodoxin family. This sequence in the C-terminal section; belongs to the flavoprotein pyridine nucleotide cytochrome reductase family. As to quaternary structure, alpha(8)-beta(8). The alpha component is a flavoprotein, the beta component is a hemoprotein. It depends on FAD as a cofactor. Requires FMN as cofactor.

The catalysed reaction is hydrogen sulfide + 3 NADP(+) + 3 H2O = sulfite + 3 NADPH + 4 H(+). The protein operates within sulfur metabolism; hydrogen sulfide biosynthesis; hydrogen sulfide from sulfite (NADPH route): step 1/1. Its function is as follows. Component of the sulfite reductase complex that catalyzes the 6-electron reduction of sulfite to sulfide. This is one of several activities required for the biosynthesis of L-cysteine from sulfate. The flavoprotein component catalyzes the electron flow from NADPH -&gt; FAD -&gt; FMN to the hemoprotein component. The sequence is that of Sulfite reductase [NADPH] flavoprotein alpha-component from Aliivibrio fischeri (strain ATCC 700601 / ES114) (Vibrio fischeri).